The sequence spans 103 residues: MAKISKALRTIPIAFIKVYQWFISPLLGPRCRFYPSCSHYACEAIQKHGTIRGIGLAAVRISKCHPAHEGGYDPVPLAKQDAKPENNSESESLLNQPTETKSL.

Residues 68-103 (HEGGYDPVPLAKQDAKPENNSESESLLNQPTETKSL) are disordered. Over residues 87-103 (NSESESLLNQPTETKSL) the composition is skewed to polar residues.

It belongs to the UPF0161 family.

Its subcellular location is the cell inner membrane. Its function is as follows. Could be involved in insertion of integral membrane proteins into the membrane. The polypeptide is Putative membrane protein insertion efficiency factor (Idiomarina loihiensis (strain ATCC BAA-735 / DSM 15497 / L2-TR)).